The chain runs to 514 residues: Bifunctional purine biosynthesis protein PurH (514 aa).

One can recognise an MGS-like domain in the interval M1–V142.

The protein belongs to the PurH family.

It carries out the reaction (6R)-10-formyltetrahydrofolate + 5-amino-1-(5-phospho-beta-D-ribosyl)imidazole-4-carboxamide = 5-formamido-1-(5-phospho-D-ribosyl)imidazole-4-carboxamide + (6S)-5,6,7,8-tetrahydrofolate. The catalysed reaction is IMP + H2O = 5-formamido-1-(5-phospho-D-ribosyl)imidazole-4-carboxamide. The protein operates within purine metabolism; IMP biosynthesis via de novo pathway; 5-formamido-1-(5-phospho-D-ribosyl)imidazole-4-carboxamide from 5-amino-1-(5-phospho-D-ribosyl)imidazole-4-carboxamide (10-formyl THF route): step 1/1. It functions in the pathway purine metabolism; IMP biosynthesis via de novo pathway; IMP from 5-formamido-1-(5-phospho-D-ribosyl)imidazole-4-carboxamide: step 1/1. The protein is Bifunctional purine biosynthesis protein PurH of Myxococcus xanthus (strain DK1622).